The sequence spans 372 residues: Queuine tRNA-ribosyltransferase (372 aa).

The active-site Proton acceptor is the Asp-92. Residues 92-96 (DSGGY), Asp-146, Gln-188, and Gly-215 each bind substrate. An RNA binding region spans residues 246–252 (GIGTIRE). Asp-265 functions as the Nucleophile in the catalytic mechanism. The tract at residues 270 to 274 (TRLGR) is RNA binding; important for wobble base 34 recognition. Residues Cys-303, Cys-305, Cys-308, and His-334 each coordinate Zn(2+).

The protein belongs to the queuine tRNA-ribosyltransferase family. Homodimer. Within each dimer, one monomer is responsible for RNA recognition and catalysis, while the other monomer binds to the replacement base PreQ1. Zn(2+) serves as cofactor.

It carries out the reaction 7-aminomethyl-7-carbaguanine + guanosine(34) in tRNA = 7-aminomethyl-7-carbaguanosine(34) in tRNA + guanine. Its pathway is tRNA modification; tRNA-queuosine biosynthesis. Functionally, catalyzes the base-exchange of a guanine (G) residue with the queuine precursor 7-aminomethyl-7-deazaguanine (PreQ1) at position 34 (anticodon wobble position) in tRNAs with GU(N) anticodons (tRNA-Asp, -Asn, -His and -Tyr). Catalysis occurs through a double-displacement mechanism. The nucleophile active site attacks the C1' of nucleotide 34 to detach the guanine base from the RNA, forming a covalent enzyme-RNA intermediate. The proton acceptor active site deprotonates the incoming PreQ1, allowing a nucleophilic attack on the C1' of the ribose to form the product. After dissociation, two additional enzymatic reactions on the tRNA convert PreQ1 to queuine (Q), resulting in the hypermodified nucleoside queuosine (7-(((4,5-cis-dihydroxy-2-cyclopenten-1-yl)amino)methyl)-7-deazaguanosine). This is Queuine tRNA-ribosyltransferase from Prochlorococcus marinus (strain SARG / CCMP1375 / SS120).